The sequence spans 426 residues: MPLLWLRGFLLASCWIIVRSSPTPGSEGHSAAPDCPSCALAALPKDVPNSQPEMVEAVKKHILNMLHLKKRPDVTQPVPKAALLNAIRKLHVGKVGENGYVEIEDDIGRRAEMNELMEQTSEIITFAESGTARKTLHFEISKEGSDLSVVERAEVWLFLKVPKANRTRTKVTIRLFQQQKHPQGSLDTGEEAEEVGLKGERSELLLSEKVVDARKSTWHVFPVSSSIQRLLDQGKSSLDVRIACEQCQESGASLVLLGKKKKKEEEGEGKKKGGGEGGAGADEEKEQSHRPFLMLQARQSEDHPHRRRRRGLECDGKVNICCKKQFFVSFKDIGWNDWIIAPSGYHANYCEGECPSHIAGTSGSSLSFHSTVINHYRMRGHSPFANLKSCCVPTKLRPMSMLYYDDGQNIIKKDIQNMIVEECGCS.

A signal peptide spans 1-20 (MPLLWLRGFLLASCWIIVRS). Residues 21 to 310 (SPTPGSEGHS…EDHPHRRRRR (290 aa)) constitute a propeptide that is removed on maturation. A glycan (N-linked (GlcNAc...) asparagine) is linked at Asn165. The segment at 259-288 (KKKKKEEEGEGKKKGGGEGGAGADEEKEQS) is disordered. The span at 263–274 (KEEEGEGKKKGG) shows a compositional bias: basic and acidic residues. Cystine bridges form between Cys314–Cys322, Cys321–Cys391, Cys350–Cys423, and Cys354–Cys425.

Belongs to the TGF-beta family. In terms of assembly, dimeric, linked by one or more disulfide bonds. Inhibin A is a dimer of alpha/INHA and beta-A/INHBA. Activin A is a homodimer of beta-A/INHBA. Activin AB is a dimer of beta-A/INHBA and beta-B/INHBB. Interacts with FST and FSTL3; these interactions prevent activin A interaction to its type II receptor. Activin A interacts with ACVR2A. Activin A interacts with BMPR2. Inhibin A interacts with ACVR1; this interaction creates a non-signaling complex (NSC) that inhibits ACVR1-mediated BMP signaling. Inhibin A interacts with ACVR2A.

The protein resides in the secreted. Functionally, inhibins/activins are involved in regulating a number of diverse functions such as hypothalamic and pituitary hormone secretion, gonadal hormone secretion, germ cell development and maturation, erythroid differentiation, insulin secretion, nerve cell survival, embryonic axial development or bone growth, depending on their subunit composition. Activin A is a homodimer of INHBA that plays a role in several essential biological processes including embryonic development, stem cell maintenance and differentiation, haematopoiesis, cell proliferation and tissue fibrosis. Signals through type I (such as ACVR1B or ACVR1C) and type II receptors (such as ACVR2A, ACVR2B or BMPR2) which, upon ligand binding, phosphorylate SMAD2 and SMAD3 intracellular signaling mediators that form a complex with SMAD4, translocate to the nucleus and modulate gene expression. Can also activate alternative non-canonical intracellular signaling pathways including the p38 MAPK, extracellular signal-regulated kinases 1/2 (ERK1/2) and c-Jun N-terminal kinases (JNKs) to modulate cell migration and differentiation. Alternatively, promotes osteoblastic differentiation via ACVRL1-SMAD1/5/9 pathway. In addition, can engage the type I receptor ACVR1 to form an ACVR1-activin A-type II receptor non-signaling complex (NSC) that renders receptors unavailable for engagement with BMPs, hence resulting in an apparent inhibition of ACVR1-mediated BMP signaling. Its function is as follows. Inhibin A is a dimer of alpha/INHA and beta-A/INHBA that functions as a feedback regulator in the hypothalamic-pituitary-gonadal (HPG) axis. Inhibits the secretion of FSH from the anterior pituitary gland by acting on pituitary gonadotrope cells. Antagonizes activin A by binding to the proteoglycan, betaglycan, and forming a stable complex with and, thereby, sequestering type II activin receptors while excluding type I receptor. This Homo sapiens (Human) protein is Inhibin beta A chain (INHBA).